A 392-amino-acid polypeptide reads, in one-letter code: Protein O-glucosyltransferase 1 (392 aa).

The signal sequence occupies residues 1–23; it reads MERRAGSRLRAWMLLLLLCPVQG. 4 cysteine pairs are disulfide-bonded: Cys49/Cys56, Cys54/Cys357, Cys102/Cys108, and Cys263/Cys286. The N-linked (GlcNAc...) asparagine glycan is linked to Asn53. The interval 103-107 is interaction with the consensus sequence C-X-S-X-[PA]-C in peptide substrates; the sequence is MFPSR. Residue Asp133 is the Proton donor/acceptor of the active site. Residues 172-178 are interaction with the consensus sequence C-X-S-X-[PA]-C in peptide substrates; the sequence is AVWPLYP. A UDP-alpha-D-glucose-binding site is contributed by Tyr177. N-linked (GlcNAc...) asparagine glycosylation occurs at Asn204. UDP-alpha-D-glucose contacts are provided by residues Ser212, Arg218, and 274–279; that span reads VAASFR. Residue Asn373 is glycosylated (N-linked (GlcNAc...) asparagine). The Prevents secretion from ER signature appears at 389–392; that stretch reads KTEL.

It belongs to the glycosyltransferase 90 family. In terms of tissue distribution, widely expressed in newborn and adult tissues (at protein level).

It is found in the endoplasmic reticulum lumen. It carries out the reaction L-seryl-[EGF-like domain protein] + UDP-alpha-D-xylose = 3-O-(beta-D-xylosyl)-L-seryl-[EGF-like domain protein] + UDP + H(+). It catalyses the reaction L-seryl-[EGF-like domain protein] + UDP-alpha-D-glucose = 3-O-(beta-D-glucosyl)-L-seryl-[EGF-like domain protein] + UDP + H(+). The protein operates within protein modification; protein glycosylation. Functionally, dual specificity glycosyltransferase that catalyzes the transfer of glucose and xylose from UDP-glucose and UDP-xylose, respectively, to a serine residue found in the consensus sequence of C-X-S-X-P-C. Specifically targets extracellular EGF repeats of protein such as CRB2, F7, F9 and NOTCH2. Acts as a positive regulator of Notch signaling by mediating O-glucosylation of Notch, leading to regulate muscle development. Notch glucosylation does not affect Notch ligand binding. Required during early development to promote gastrulation: acts by mediating O-glucosylation of CRB2, which is required for CRB2 localization to the cell membrane. In Mus musculus (Mouse), this protein is Protein O-glucosyltransferase 1.